Consider the following 482-residue polypeptide: Ras GTPase-activating protein-binding protein 2 (482 aa).

Residues valine 11–tyrosine 133 form the NTF2 domain. Positions aspartate 140–glutamate 158 are enriched in acidic residues. Disordered stretches follow at residues aspartate 140 to asparagine 170 and glutamate 187 to aspartate 318. 3 positions are modified to phosphoserine: serine 141, serine 149, and serine 225. The tract at residues glutamate 142 to glutamate 220 is acidic disordered region. Over residues glutamate 191–serine 225 the composition is skewed to basic and acidic residues. A Phosphothreonine modification is found at threonine 227. Residues alanine 247 to glycine 264 show a composition bias toward polar residues. Lysine 281 is covalently cross-linked (Glycyl lysine isopeptide (Lys-Gly) (interchain with G-Cter in SUMO2)). Residues arginine 290 to proline 300 are compositionally biased toward basic and acidic residues. In terms of domain architecture, RRM spans histidine 331–threonine 409. N6-succinyllysine is present on lysine 392. The segment at valine 404–arginine 476 is RG-rich region. Residues lysine 408–arginine 432 are compositionally biased toward basic and acidic residues. A disordered region spans residues lysine 408 to arginine 482. Residues glycine 433–methionine 445 show a composition bias toward gly residues. Residue arginine 457 is modified to Omega-N-methylarginine. Residue serine 466 is modified to Phosphoserine. Arginine 468 carries the omega-N-methylarginine modification.

In terms of assembly, forms homooligomers. Forms heterodimers with G3BP1. Interacts with NFKBIA (via N-terminus). Interacts (via NTF2 domain) with USP10; inhibiting stress granule formation. Interacts (via NTF2 domain) with CAPRIN1; promoting stress granule formation. Associates (via RG-rich region) with 40S ribosome subunits. Interacts with PABPC1.

It localises to the cytoplasm. Its subcellular location is the stress granule. Its activity is regulated as follows. Under physiological conditions, G3BP2 adopts a compact state that is stabilized by intramolecular interactions between the RG-rich and the acidic regions that inhibit phase separation. Upon stress, polysomes disassemble and mRNAs are released in an unfolded protein-free state. Binding of unfolded mRNA to G3BP2 outcompetes the intramolecular interactions and RNA-bound G3BP2 adopts an expanded conformation in which the RG-rich region becomes exposed to engage in protein-protein and protein-RNA interactions, allowing physical cross-linking of RNA molecules to form protein-RNA condensates, leading to liquid-liquid phase separation (LLPS). Functionally, scaffold protein that plays an essential role in cytoplasmic stress granule formation which acts as a platform for antiviral signaling. Plays an essential role in stress granule formation. Stress granules are membraneless compartments that store mRNAs and proteins, such as stalled translation pre-initiation complexes, in response to stress. Promotes formation of stress granules phase-separated membraneless compartment by undergoing liquid-liquid phase separation (LLPS) upon unfolded RNA-binding: functions as a molecular switch that triggers RNA-dependent LLPS in response to a rise in intracellular free RNA concentrations. The chain is Ras GTPase-activating protein-binding protein 2 (G3bp2) from Mus musculus (Mouse).